We begin with the raw amino-acid sequence, 392 residues long: Rhizopuspepsin-5 (392 aa).

Positions 1 to 21 (MKFSLISSCVALAVLVLSTEA) are cleaved as a signal peptide. Positions 22–69 (APNGKKVNIPLTKNKDYKPNAKNAIQKVLAKYHRHRSTSSSSNSTSTD) are cleaved as a propeptide — activation peptide. Residues 85 to 389 (YFGQVKVGTP…NPTVPQVQIA (305 aa)) enclose the Peptidase A1 domain. Asp-103 is a catalytic residue. Residues Cys-116 and Cys-119 are joined by a disulfide bond. Residue Asp-286 is part of the active site. The cysteines at positions 320 and 353 are disulfide-linked.

Belongs to the peptidase A1 family.

The catalysed reaction is Hydrolysis of proteins with broad specificity similar to that of pepsin A, preferring hydrophobic residues at P1 and P1'. Clots milk and activates trypsinogen. Does not cleave 4-Gln-|-His-5, but does cleave 10-His-|-Leu-11 and 12-Val-|-Glu-13 in B chain of insulin.. In Rhizopus niveus, this protein is Rhizopuspepsin-5.